A 244-amino-acid chain; its full sequence is Lymphotoxin-beta (244 aa).

Residues 1–18 (MGALGLEGRGGRLQGRGS) lie on the Cytoplasmic side of the membrane. A helical; Signal-anchor for type II membrane protein membrane pass occupies residues 19 to 48 (LLLAVAGATSLVTLLLAVPITVLAVLALVP). Over 49-244 (QDQGGLVTET…KTFFGAVMVG (196 aa)) the chain is Extracellular. Residues 88–243 (PAAHLIGAPL…GKTFFGAVMV (156 aa)) form the THD domain. A glycan (N-linked (GlcNAc...) asparagine) is linked at Asn-222.

The protein belongs to the tumor necrosis factor family. As to quaternary structure, heterotrimer of either two LTB and one LTA subunits or (less prevalent) one LTB and two LTA subunits. In terms of tissue distribution, spleen and thymus.

The protein localises to the membrane. Its function is as follows. Cytokine that binds to LTBR/TNFRSF3. May play a specific role in immune response regulation. Provides the membrane anchor for the attachment of the heterotrimeric complex to the cell surface. Isoform 2 is probably non-functional. This Homo sapiens (Human) protein is Lymphotoxin-beta (LTB).